We begin with the raw amino-acid sequence, 156 residues long: 6,7-dimethyl-8-ribityllumazine synthase (156 aa).

Residues Phe-22, 57-59 (AYE), and 81-83 (TVI) each bind 5-amino-6-(D-ribitylamino)uracil. Residue 86-87 (GT) participates in (2S)-2-hydroxy-3-oxobutyl phosphate binding. His-89 serves as the catalytic Proton donor. Phe-114 contacts 5-amino-6-(D-ribitylamino)uracil. A (2S)-2-hydroxy-3-oxobutyl phosphate-binding site is contributed by Arg-128.

The protein belongs to the DMRL synthase family. In terms of assembly, forms an icosahedral capsid composed of 60 subunits, arranged as a dodecamer of pentamers.

It catalyses the reaction (2S)-2-hydroxy-3-oxobutyl phosphate + 5-amino-6-(D-ribitylamino)uracil = 6,7-dimethyl-8-(1-D-ribityl)lumazine + phosphate + 2 H2O + H(+). Its pathway is cofactor biosynthesis; riboflavin biosynthesis; riboflavin from 2-hydroxy-3-oxobutyl phosphate and 5-amino-6-(D-ribitylamino)uracil: step 1/2. Functionally, catalyzes the formation of 6,7-dimethyl-8-ribityllumazine by condensation of 5-amino-6-(D-ribitylamino)uracil with 3,4-dihydroxy-2-butanone 4-phosphate. This is the penultimate step in the biosynthesis of riboflavin. The polypeptide is 6,7-dimethyl-8-ribityllumazine synthase (Edwardsiella ictaluri (strain 93-146)).